The following is a 563-amino-acid chain: Lengsin (563 aa).

Residues 1-115 (MTDEGDLAQE…PNTDPTRYNA (115 aa)) are disordered. The span at 26 to 37 (SKLRRARRKVTK) shows a compositional bias: basic residues. Composition is skewed to polar residues over residues 51–62 (ANSSEMSRNQIA) and 105–115 (SPNTDPTRYNA). Positions 137–231 (NHLQFVRFEA…VICDTFTVTG (95 aa)) constitute a GS beta-grasp domain. The 326-residue stretch at 238–563 (PRYIAKRQLR…EGNKFLEYFI (326 aa)) folds into the GS catalytic domain.

This sequence belongs to the glutamine synthetase family. In terms of assembly, dodecamer. Interacts with BFSP2 and VIM. In terms of tissue distribution, expressed in lens.

Its function is as follows. May act as a component of the cytoskeleton or as a chaperone for the reorganization of intermediate filament proteins during terminal differentiation in the lens. Does not seem to have enzymatic activity. This chain is Lengsin (Lgsn), found in Mus musculus (Mouse).